A 518-amino-acid chain; its full sequence is Na(+)/H(+) exchange regulatory cofactor NHE-RF3 (518 aa).

The PDZ 1 domain occupies 9–90; that stretch reads ECKLSKEEGQ…AVTLLVLDGN (82 aa). Phosphoserine occurs at positions 108, 148, 192, 250, 334, and 348. PDZ domains are found at residues 135–215 and 243–323; these read LCYL…VDKE and IVEM…VDKE. Residues 378 to 458 form the PDZ 4 domain; that stretch reads LCRLDKGENG…NVTLLVCGKK (81 aa). Threonine 451 carries the phosphothreonine modification. A disordered region spans residues 499-518; sequence KERAHSTASNSSSNSEDTEL. Phosphoserine occurs at positions 507, 509, 510, 511, and 513. A compositionally biased stretch (low complexity) spans 507 to 518; the sequence is SNSSSNSEDTEL.

The protein belongs to the NHER family. In terms of assembly, interacts with PDZK1IP1 and ABCC2. Interacts (via PDZ domains 1 and 3) with SCARB1 (C-terminal domain). Forms a heterodimeric complex with NHERF1. Interacts with AKAP2, BCR, CFTR, SLCO1A1, SLC22A12, SLC22A4, SLC22A5, NHERF2 and SLC17A1. Component of a complex, composed of PDZK1, SYNGAP1, KLHL17 and NMDA receptors. Interacts (via PDZ1 domain) directly with KLHL17; the interaction is important for integrity of actin cytoskeleton structures in neurons. Interacts (via C-terminal PDZ domain) with SLC9A3 (via C-terminal domain). Interacts (via the first PDZ domain) with PTGIR (via non-isoprenylated C-terminus). Binds to the C-terminal region of SLC26A3. Interacts (via C-terminal PDZ domain) with SLC26A6 (via C-terminal domain). Interacts (via PDZ domains 1 and 3) with SLC5A8 (via PDZ-binding motif); interaction increases nicotinate transport activity of SLC5A8. As to expression, highly expressed in the brush border membrane of duodenal and ileal mucosa.

The protein resides in the membrane. It localises to the cell membrane. A scaffold protein that connects plasma membrane proteins and regulatory components, regulating their surface expression in epithelial cells apical domains. May be involved in the coordination of a diverse range of regulatory processes for ion transport and second messenger cascades. In complex with NHERF1, may cluster proteins that are functionally dependent in a mutual fashion and modulate the trafficking and the activity of the associated membrane proteins. May play a role in the cellular mechanisms associated with multidrug resistance through its interaction with ABCC2 and PDZK1IP1. May potentiate the CFTR chloride channel activity. Required for normal cell-surface expression of SCARB1. Plays a role in maintaining normal plasma cholesterol levels via its effects on SCARB1. Plays a role in the normal localization and function of the chloride-anion exchanger SLC26A6 to the plasma membrane in the brush border of the proximal tubule of the kidney. May be involved in the regulation of proximal tubular Na(+)-dependent inorganic phosphate cotransport therefore playing an important role in tubule function. This Oryctolagus cuniculus (Rabbit) protein is Na(+)/H(+) exchange regulatory cofactor NHE-RF3 (PDZK1).